Reading from the N-terminus, the 496-residue chain is Cobyric acid synthase (496 aa).

Residues 264–458 (HTRIAVVAYP…LHGLFEDAAV (195 aa)) form the GATase cobBQ-type domain. Cys345 serves as the catalytic Nucleophile. The active site involves His450.

It belongs to the CobB/CobQ family. CobQ subfamily.

It functions in the pathway cofactor biosynthesis; adenosylcobalamin biosynthesis. Catalyzes amidations at positions B, D, E, and G on adenosylcobyrinic A,C-diamide. NH(2) groups are provided by glutamine, and one molecule of ATP is hydrogenolyzed for each amidation. This Acidovorax ebreus (strain TPSY) (Diaphorobacter sp. (strain TPSY)) protein is Cobyric acid synthase.